Here is a 585-residue protein sequence, read N- to C-terminus: Protein DENND6B (585 aa).

Positions 1 to 10 are enriched in low complexity; it reads MEVPVGPGPR. A disordered region spans residues 1–25; it reads MEVPVGPGPRQAGGGLGATRSSSSG. The 179-residue stretch at 43 to 221 folds into the uDENN domain; it reads ECVCVVTFDL…IQVRIPSRVD (179 aa). The cDENN domain maps to 246–373; sequence VHELDLFRCF…VKLKKPSRLK (128 aa). Residues 375 to 499 form the dDENN domain; sequence LDTKPGLYTS…KSPHFDGWYR (125 aa).

This sequence belongs to the DENND6 family.

The protein localises to the recycling endosome. It is found in the cytoplasm. Functionally, guanine nucleotide exchange factor (GEF) for RAB14. Also has some, lesser GEF activity towards RAB35. This chain is Protein DENND6B (Dennd6b), found in Mus musculus (Mouse).